A 736-amino-acid chain; its full sequence is Neprilysin-2 (736 aa).

Over 1–19 the chain is Cytoplasmic; that stretch reads MRPDEEDGTTKSPGSRWTR. The chain crosses the membrane as a helical; Signal-anchor for type II membrane protein span at residues 20–40; it reads IWAIIALILLILFLLVLGAAI. The Extracellular portion of the chain corresponds to 41-736; it reads YFYINYKDSS…MNPREKCRVW (696 aa). A Peptidase M13 domain is found at 52-736; sequence VCLSPGCIKT…MNPREKCRVW (685 aa). 5 disulfide bridges follow: cysteine 53–cysteine 58, cysteine 76–cysteine 721, cysteine 84–cysteine 681, cysteine 142–cysteine 399, and cysteine 608–cysteine 733. Residues 103–123 adopt a coiled-coil conformation; sequence FENLGQDLEFALKELLDENDE. Position 571 (histidine 571) interacts with Zn(2+). Residue glutamate 572 is part of the active site. Histidine 575 and glutamate 633 together coordinate Zn(2+). The active-site Proton donor is the aspartate 637.

Belongs to the peptidase M13 family. Requires Zn(2+) as cofactor. Expressed in muscle cells, GLR cells, SMB motor neurons and AIM interneurons.

The protein localises to the membrane. Required for olfactory plasticity, which is the change from positive chemotaxis to dispersal after prolonged exposure to an odorant. Thought to antagonise snet-1 by degrading excess snet-1 peptides and thus enabling olfactory plasticity. This is Neprilysin-2 from Caenorhabditis elegans.